A 439-amino-acid chain; its full sequence is 23S rRNA (uracil(1939)-C(5))-methyltransferase RlmD (439 aa).

The TRAM domain occupies 10 to 69; sequence KTQLNTRHQAVQVERLDHHGAGIAYLKKKPLFIDGALPGEEVVTQLVEEKSKFARGKLIK. 4 residues coordinate [4Fe-4S] cluster: Cys-82, Cys-88, Cys-91, and Cys-169. 6 residues coordinate S-adenosyl-L-methionine: Gln-272, Phe-301, Asn-306, Glu-322, Asn-349, and Asp-370. Cys-396 (nucleophile) is an active-site residue.

It belongs to the class I-like SAM-binding methyltransferase superfamily. RNA M5U methyltransferase family. RlmD subfamily.

The catalysed reaction is uridine(1939) in 23S rRNA + S-adenosyl-L-methionine = 5-methyluridine(1939) in 23S rRNA + S-adenosyl-L-homocysteine + H(+). Catalyzes the formation of 5-methyl-uridine at position 1939 (m5U1939) in 23S rRNA. The sequence is that of 23S rRNA (uracil(1939)-C(5))-methyltransferase RlmD from Vibrio campbellii (strain ATCC BAA-1116).